The following is a 163-amino-acid chain: Ribonuclease P protein subunit p25-like protein (163 aa).

Disordered stretches follow at residues 1-22 and 129-163; these read MEHYRKAGSVELPAPSPMPQLP and NEYGYQPPGAPPDLGPTPASSCGPQPRRRARDTRF. Basic residues predominate over residues 154 to 163; the sequence is PRRRARDTRF.

This sequence belongs to the histone-like Alba family.

The protein localises to the nucleus. May be a component of ribonuclease P or MRP. The chain is Ribonuclease P protein subunit p25-like protein (RPP25L) from Bos taurus (Bovine).